A 542-amino-acid polypeptide reads, in one-letter code: MSKQPIITSEEVRGVIRNLLDSTLSAAREANEFEVGRVVDAADGVAHIEGLPALMASELVEFSNGTFGVTLNLDEDLAGVVVLGEFDGIVEGMDVRSTGRVLSIPVGDAFLGRVVDPLGRPVDGLGEVPHETYRELELQAAGVMQRRSVHEPIQTGIKAIDTMIPIGRGQRQLIIGDRQTGKTTIAIDTIINQKDNWSDPEKRVFCIYVAIGQKGSTIAGVKRVLEEAGCMEYTTIVATPASDPAGFKYIAPYSGSAIGQHWMYQGRHVLIVFDDLSKQAEAYRAISLLLRRPPGREAYPGDVFYLHSRLLERCAKLSDEMGGGSMTGLPIIETKANDISAYIPTNVISITDGQIFLQSDLFNANQRPAVDVGISVSRVGGDAQIKSIKKVSGMLKLELAQYRALEAFSMFASDLDAVSRRQLDRGARLSELLRQQQQSPYPVEDQVVSIWVGSNGYIDDIPLSDVLDFERDLLEYLRNRTSILDDLRTCGDLTDALLERLKEAVESFKNKVYFMRVDEREKDPLEDENIGQEELVRSRRAN.

176 to 183 (GDRQTGKT) contacts ATP.

This sequence belongs to the ATPase alpha/beta chains family. F-type ATPases have 2 components, CF(1) - the catalytic core - and CF(0) - the membrane proton channel. CF(1) has five subunits: alpha(3), beta(3), gamma(1), delta(1), epsilon(1). CF(0) has three main subunits: a(1), b(2) and c(9-12). The alpha and beta chains form an alternating ring which encloses part of the gamma chain. CF(1) is attached to CF(0) by a central stalk formed by the gamma and epsilon chains, while a peripheral stalk is formed by the delta and b chains.

The protein localises to the cell membrane. The catalysed reaction is ATP + H2O + 4 H(+)(in) = ADP + phosphate + 5 H(+)(out). Produces ATP from ADP in the presence of a proton gradient across the membrane. The alpha chain is a regulatory subunit. This is ATP synthase subunit alpha from Tropheryma whipplei (strain TW08/27) (Whipple's bacillus).